A 316-amino-acid chain; its full sequence is Peroxidase 67 (316 aa).

An N-terminal signal peptide occupies residues 1 to 19 (MLKVVLLMMIMMLASQSEA). Residue glutamine 20 is modified to Pyrrolidone carboxylic acid. 4 cysteine pairs are disulfide-bonded: cysteine 30-cysteine 110, cysteine 63-cysteine 68, cysteine 116-cysteine 312, and cysteine 196-cysteine 221. Histidine 61 functions as the Proton acceptor in the catalytic mechanism. 5 residues coordinate Ca(2+): aspartate 62, valine 65, glycine 67, aspartate 69, and serine 71. Residue proline 159 coordinates substrate. Histidine 189 is a binding site for heme b. Residue threonine 190 participates in Ca(2+) binding. A glycan (N-linked (GlcNAc...) asparagine) is linked at asparagine 205. 3 residues coordinate Ca(2+): aspartate 236, serine 239, and aspartate 244.

Belongs to the peroxidase family. Classical plant (class III) peroxidase subfamily. Heme b serves as cofactor. Ca(2+) is required as a cofactor.

The protein resides in the secreted. It carries out the reaction 2 a phenolic donor + H2O2 = 2 a phenolic radical donor + 2 H2O. Functionally, removal of H(2)O(2), oxidation of toxic reductants, biosynthesis and degradation of lignin, suberization, auxin catabolism, response to environmental stresses such as wounding, pathogen attack and oxidative stress. These functions might be dependent on each isozyme/isoform in each plant tissue. In Arabidopsis thaliana (Mouse-ear cress), this protein is Peroxidase 67 (PER67).